The primary structure comprises 206 residues: Pyridoxine/pyridoxamine 5'-phosphate oxidase (206 aa).

Residues 53-58, 68-69, lysine 75, and glutamine 97 each bind FMN; these read RMVLLK and YT. Residue lysine 58 participates in substrate binding. Substrate-binding residues include tyrosine 115, arginine 119, and serine 123. Residues 132–133 and tryptophan 177 each bind FMN; that span reads QS. 183 to 185 is a substrate binding site; the sequence is RLH. Arginine 187 is a binding site for FMN.

It belongs to the pyridoxamine 5'-phosphate oxidase family. As to quaternary structure, homodimer. FMN is required as a cofactor.

The catalysed reaction is pyridoxamine 5'-phosphate + O2 + H2O = pyridoxal 5'-phosphate + H2O2 + NH4(+). The enzyme catalyses pyridoxine 5'-phosphate + O2 = pyridoxal 5'-phosphate + H2O2. It participates in cofactor metabolism; pyridoxal 5'-phosphate salvage; pyridoxal 5'-phosphate from pyridoxamine 5'-phosphate: step 1/1. Its pathway is cofactor metabolism; pyridoxal 5'-phosphate salvage; pyridoxal 5'-phosphate from pyridoxine 5'-phosphate: step 1/1. Functionally, catalyzes the oxidation of either pyridoxine 5'-phosphate (PNP) or pyridoxamine 5'-phosphate (PMP) into pyridoxal 5'-phosphate (PLP). The polypeptide is Pyridoxine/pyridoxamine 5'-phosphate oxidase (Sinorhizobium fredii (strain NBRC 101917 / NGR234)).